The following is a 385-amino-acid chain: Putative hydroxypyruvate reductase (385 aa).

It catalyses the reaction (R)-glycerate + NAD(+) = 3-hydroxypyruvate + NADH + H(+). The enzyme catalyses (R)-glycerate + NADP(+) = 3-hydroxypyruvate + NADPH + H(+). It participates in carbohydrate acid metabolism; tartrate degradation; 3-hydroxypyruvate from D-glycerate: step 1/1. Its function is as follows. Degrades an unidentified toxic product from the first step of tartrate degradation. The polypeptide is Putative hydroxypyruvate reductase (ttuD) (Agrobacterium vitis (Rhizobium vitis)).